A 331-amino-acid polypeptide reads, in one-letter code: MLNRKTSHFLGMRVQSELEHLSELRREAGKDRSSVHGSAARTRASVRTQWTTAAAAKADEDPGANLFPPPLPRPRICMWKYLDVHSMHQLEKTTNAEMREVLAELLELGCPEQSLRDAITLDLFCHALIFCRQQGFSLEQTSAACALLQDLHKACIATPLGNVEECYRYFTSVLFCHGVRRPPFSIDLFKEEQLLALEDYVVNTYFRHFKLYKYVFTPQVRLDLSLTYMGLQPPKLWPESETEKEESKEMEEQAVTPQKEELETVAPPEPEPSHIHVLRAYIKTQVNKELEQLQGLVEERLKASEERLSSKLTALERPFQLPPGKGKSKTK.

The residue at position 34 (serine 34) is a Phosphoserine. 2 disordered regions span residues 236–271 and 309–331; these read LWPE…PEPE and SSKL…SKTK. The stretch at 286–317 forms a coiled coil; it reads VNKELEQLQGLVEERLKASEERLSSKLTALER.

It is found in the cell projection. The protein localises to the cilium. Its subcellular location is the flagellum. It localises to the cytoplasmic vesicle. The protein resides in the secretory vesicle. It is found in the acrosome. The protein localises to the cytoplasm. The polypeptide is Cilia- and flagella-associated protein 119 (Homo sapiens (Human)).